Reading from the N-terminus, the 97-residue chain is Defensin-like protein 301 (97 aa).

Residues 1–24 (MEKVTSIFFVLLLISSCLILRSQG) form the signal peptide. Disulfide bonds link cysteine 28/cysteine 47, cysteine 34/cysteine 53, cysteine 39/cysteine 55, cysteine 65/cysteine 84, cysteine 71/cysteine 92, and cysteine 76/cysteine 94.

The protein belongs to the DEFL family.

It is found in the secreted. The polypeptide is Defensin-like protein 301 (Arabidopsis thaliana (Mouse-ear cress)).